Consider the following 81-residue polypeptide: ATP synthase subunit C, cyanelle (81 aa).

2 helical membrane passes run 7–27 (AASV…PGIG) and 57–77 (LAFM…LLFA).

Belongs to the ATPase C chain family. As to quaternary structure, F-type ATPases have 2 components, F(1) - the catalytic core - and F(0) - the membrane proton channel. F(1) has five subunits: alpha(3), beta(3), gamma(1), delta(1), epsilon(1). F(0) has four main subunits: a(1), b(1), b'(1) and c(10-14). The alpha and beta chains form an alternating ring which encloses part of the gamma chain. F(1) is attached to F(0) by a central stalk formed by the gamma and epsilon chains, while a peripheral stalk is formed by the delta, b and b' chains.

It localises to the plastid. The protein resides in the cyanelle thylakoid membrane. Functionally, f(1)F(0) ATP synthase produces ATP from ADP in the presence of a proton or sodium gradient. F-type ATPases consist of two structural domains, F(1) containing the extramembraneous catalytic core and F(0) containing the membrane proton channel, linked together by a central stalk and a peripheral stalk. During catalysis, ATP synthesis in the catalytic domain of F(1) is coupled via a rotary mechanism of the central stalk subunits to proton translocation. Key component of the F(0) channel; it plays a direct role in translocation across the membrane. A homomeric c-ring of between 10-14 subunits forms the central stalk rotor element with the F(1) delta and epsilon subunits. This is ATP synthase subunit C, cyanelle from Cyanophora paradoxa.